The sequence spans 255 residues: Microfibril-associated glycoprotein 4 (255 aa).

The N-terminal stretch at 1-20 (MEALLVLPLLLLLSAGPCAP) is a signal peptide. The Cell attachment site signature appears at 26-28 (RGD). One can recognise a Fibrinogen C-terminal domain in the interval 32–255 (KSCLQLPLDC…KRTEMKIRRA (224 aa)). N-linked (GlcNAc...) asparagine glycans are attached at residues N87 and N137.

Homodimer. Can also form higher oligomers. Interacts with FBN1, FBN2 and LOX. Interacts with COL1A1 in a Ca (2+)-dependent manner. Interacts with ELN in a Ca (2+)-dependent manner; this interaction promotes ELN self-assembly.

Its subcellular location is the secreted. The protein resides in the extracellular space. It is found in the extracellular matrix. Functionally, could be involved in calcium-dependent cell adhesion or intercellular interactions. May contribute to the elastic fiber assembly and/or maintenance. The protein is Microfibril-associated glycoprotein 4 (MFAP4) of Bos taurus (Bovine).